The primary structure comprises 98 residues: Citrate lyase acyl carrier protein (98 aa).

O-(phosphoribosyl dephospho-coenzyme A)serine is present on Ser-14.

It belongs to the CitD family. Oligomer with a subunit composition of (alpha,beta,gamma)6.

It is found in the cytoplasm. Its function is as follows. Covalent carrier of the coenzyme of citrate lyase. This Vibrio cholerae serotype O1 (strain ATCC 39541 / Classical Ogawa 395 / O395) protein is Citrate lyase acyl carrier protein.